We begin with the raw amino-acid sequence, 712 residues long: Polyribonucleotide nucleotidyltransferase (712 aa).

Asp487 and Asp493 together coordinate Mg(2+). Residues 554-613 (PKIITMTINPDKIRDVIGPSGKQINKIIEETGVKIDIEQDGTVFISSINQEMNDKAKKII) enclose the KH domain. Residues 623–691 (GEIYEGKVKR…KQGRVNLSRK (69 aa)) enclose the S1 motif domain.

The protein belongs to the polyribonucleotide nucleotidyltransferase family. Mg(2+) serves as cofactor.

The protein resides in the cytoplasm. The catalysed reaction is RNA(n+1) + phosphate = RNA(n) + a ribonucleoside 5'-diphosphate. Functionally, involved in mRNA degradation. Catalyzes the phosphorolysis of single-stranded polyribonucleotides processively in the 3'- to 5'-direction. The chain is Polyribonucleotide nucleotidyltransferase from Bacillus anthracis.